The sequence spans 145 residues: Deoxyuridine 5'-triphosphate nucleotidohydrolase (145 aa).

Substrate contacts are provided by residues 62-64, Asn75, 79-81, and Lys89; these read RSG and TVD.

This sequence belongs to the dUTPase family. Mg(2+) serves as cofactor.

The catalysed reaction is dUTP + H2O = dUMP + diphosphate + H(+). It functions in the pathway pyrimidine metabolism; dUMP biosynthesis; dUMP from dCTP (dUTP route): step 2/2. This enzyme is involved in nucleotide metabolism: it produces dUMP, the immediate precursor of thymidine nucleotides and it decreases the intracellular concentration of dUTP so that uracil cannot be incorporated into DNA. The polypeptide is Deoxyuridine 5'-triphosphate nucleotidohydrolase (Helicobacter pylori (strain Shi470)).